Here is a 186-residue protein sequence, read N- to C-terminus: RNA polymerase sigma factor NccH (186 aa).

The Polymerase core binding signature appears at 49 to 62 (DIVQDTFIAAWHAL). Residues 152 to 171 (HPEAAMALGTSAKAVESRVA) constitute a DNA-binding region (H-T-H motif).

It belongs to the sigma-70 factor family. ECF subfamily.

Its function is as follows. Sigma factors are initiation factors that promote the attachment of RNA polymerase to specific initiation sites and are then released. This sigma factor regulates the genes for a membrane-located efflux system that confers resistance to nickel, cobalt and cadmium. The protein is RNA polymerase sigma factor NccH (nccH) of Alcaligenes xylosoxydans xylosoxydans (Achromobacter xylosoxidans).